The following is a 265-amino-acid chain: Imidazole glycerol phosphate synthase subunit HisF (265 aa).

Residues Asp11 and Asp130 contribute to the active site.

The protein belongs to the HisA/HisF family. As to quaternary structure, heterodimer of HisH and HisF.

It localises to the cytoplasm. It carries out the reaction 5-[(5-phospho-1-deoxy-D-ribulos-1-ylimino)methylamino]-1-(5-phospho-beta-D-ribosyl)imidazole-4-carboxamide + L-glutamine = D-erythro-1-(imidazol-4-yl)glycerol 3-phosphate + 5-amino-1-(5-phospho-beta-D-ribosyl)imidazole-4-carboxamide + L-glutamate + H(+). It functions in the pathway amino-acid biosynthesis; L-histidine biosynthesis; L-histidine from 5-phospho-alpha-D-ribose 1-diphosphate: step 5/9. In terms of biological role, IGPS catalyzes the conversion of PRFAR and glutamine to IGP, AICAR and glutamate. The HisF subunit catalyzes the cyclization activity that produces IGP and AICAR from PRFAR using the ammonia provided by the HisH subunit. The sequence is that of Imidazole glycerol phosphate synthase subunit HisF from Idiomarina loihiensis (strain ATCC BAA-735 / DSM 15497 / L2-TR).